Here is an 88-residue protein sequence, read N- to C-terminus: Small ribosomal subunit protein uS17 (88 aa).

It belongs to the universal ribosomal protein uS17 family. As to quaternary structure, part of the 30S ribosomal subunit.

Functionally, one of the primary rRNA binding proteins, it binds specifically to the 5'-end of 16S ribosomal RNA. The sequence is that of Small ribosomal subunit protein uS17 from Prochlorococcus marinus (strain MIT 9312).